Consider the following 78-residue polypeptide: Large ribosomal subunit protein bL28 (78 aa).

Belongs to the bacterial ribosomal protein bL28 family.

This is Large ribosomal subunit protein bL28 from Glaesserella parasuis serovar 5 (strain SH0165) (Haemophilus parasuis).